The chain runs to 293 residues: Peptidoglycan deacetylase (293 aa).

Zn(2+) is bound by residues D14, H86, and H90. The 248-residue stretch at 29–276 (PDDISRGLFA…INKHEGVRWV (248 aa)) folds into the NodB homology domain.

This sequence belongs to the polysaccharide deacetylase family. As to quaternary structure, homotetramer.

It carries out the reaction Deacetylation of xylans and xylo-oligosaccharides.. Functionally, catalyzes the N-deacetylation of peptidoglycan (PG), an important mechanism that appears to confer lysozyme resistance and to mitigate host immune detection; this likely contributes to pathogen persistence in the host. The exact nature of the residue in PG that is deacetylated has not been determined. Is also able to catalyze the deacetylation of acetylated xylan, and, to a lesser extent, that of chitin and chitosan. Therefore, this enzyme might play a role during infection, considering that xylan-containing carbohydrate structures are among those commonly consumed by humans. This Helicobacter pylori (strain ATCC 700392 / 26695) (Campylobacter pylori) protein is Peptidoglycan deacetylase (pgdA).